We begin with the raw amino-acid sequence, 1052 residues long: Kruppel-like factor 18 (1052 aa).

3 consecutive C2H2-type zinc fingers follow at residues 964 to 988 (YVCTYEDCKMSYSKACHLRTHMRKH), 994 to 1018 (YVCDVEGCTWKFARSDELNRHKKRH), and 1024 to 1046 (YLCSICSKNFARSDHLKQHAKVH).

It belongs to the krueppel C2H2-type zinc-finger protein family.

It localises to the nucleus. This is Kruppel-like factor 18 from Homo sapiens (Human).